The sequence spans 98 residues: NADH-ubiquinone oxidoreductase chain 4L (98 aa).

Transmembrane regions (helical) follow at residues 1–21 (MSMVYVNISLAFTLSLMGLLM), 29–49 (SLLCLEGMMLSLFVMMSITIM), and 61–81 (IILLVFAACEAALGLSLLVMI).

Belongs to the complex I subunit 4L family. In terms of assembly, core subunit of respiratory chain NADH dehydrogenase (Complex I) which is composed of 45 different subunits.

Its subcellular location is the mitochondrion inner membrane. It catalyses the reaction a ubiquinone + NADH + 5 H(+)(in) = a ubiquinol + NAD(+) + 4 H(+)(out). Its function is as follows. Core subunit of the mitochondrial membrane respiratory chain NADH dehydrogenase (Complex I) which catalyzes electron transfer from NADH through the respiratory chain, using ubiquinone as an electron acceptor. Part of the enzyme membrane arm which is embedded in the lipid bilayer and involved in proton translocation. The polypeptide is NADH-ubiquinone oxidoreductase chain 4L (MT-ND4L) (Procyon lotor (Raccoon)).